The chain runs to 405 residues: 2,3-diketo-5-methylthiopentyl-1-phosphate enolase (405 aa).

The active-site Proton acceptor is the Lys91. Substrate contacts are provided by residues Lys140, 166–169, His257, Gly329, and 351–352; these read KDDE and GG. Mg(2+)-binding residues include Lys166, Asp168, and Glu169. Position 166 is an N6-carboxylysine (Lys166).

Belongs to the RuBisCO large chain family. Type IV subfamily. Homodimer. Requires Mg(2+) as cofactor.

The enzyme catalyses 5-methylsulfanyl-2,3-dioxopentyl phosphate = 2-hydroxy-5-methylsulfanyl-3-oxopent-1-enyl phosphate. It functions in the pathway amino-acid biosynthesis; L-methionine biosynthesis via salvage pathway; L-methionine from S-methyl-5-thio-alpha-D-ribose 1-phosphate: step 3/6. In terms of biological role, catalyzes the enolization of 2,3-diketo-5-methylthiopentyl-1-phosphate (DK-MTP-1-P) into 2-hydroxy-3-keto-5-methylthiopentenyl-1-phosphate (HK-MTPenyl-1-P). The chain is 2,3-diketo-5-methylthiopentyl-1-phosphate enolase from Bacillus licheniformis (strain ATCC 14580 / DSM 13 / JCM 2505 / CCUG 7422 / NBRC 12200 / NCIMB 9375 / NCTC 10341 / NRRL NRS-1264 / Gibson 46).